The sequence spans 270 residues: Phosphatidylglycerol--prolipoprotein diacylglyceryl transferase (270 aa).

A run of 7 helical transmembrane segments spans residues 17 to 37 (LAIR…LWFG), 59 to 79 (MLFY…VLFY), 95 to 115 (WEGG…MWVF), 129 to 149 (FIAP…FING), 175 to 195 (PSQL…LWLF), 202 to 222 (MGAV…LAEF), and 237 to 257 (LSMG…MVVW). Arg-142 is a binding site for a 1,2-diacyl-sn-glycero-3-phospho-(1'-sn-glycerol).

The protein belongs to the Lgt family.

The protein localises to the cell inner membrane. The enzyme catalyses L-cysteinyl-[prolipoprotein] + a 1,2-diacyl-sn-glycero-3-phospho-(1'-sn-glycerol) = an S-1,2-diacyl-sn-glyceryl-L-cysteinyl-[prolipoprotein] + sn-glycerol 1-phosphate + H(+). Its pathway is protein modification; lipoprotein biosynthesis (diacylglyceryl transfer). Catalyzes the transfer of the diacylglyceryl group from phosphatidylglycerol to the sulfhydryl group of the N-terminal cysteine of a prolipoprotein, the first step in the formation of mature lipoproteins. The sequence is that of Phosphatidylglycerol--prolipoprotein diacylglyceryl transferase from Cupriavidus metallidurans (strain ATCC 43123 / DSM 2839 / NBRC 102507 / CH34) (Ralstonia metallidurans).